The sequence spans 184 residues: Heme transporter hrg-4 (184 aa).

The chain crosses the membrane as a helical span at residues 19–39 (IGWTIFGIVFGISAILTYAIK). Asn42 carries an N-linked (GlcNAc...) asparagine glycan. The next 3 helical transmembrane spans lie at 46 to 66 (TATTAIATLFACETLYLYWAL), 87 to 107 (VFIGLLGLLGCLVCYIIAGIT), and 124 to 146 (IYFSKFAAMYGENLWFTGSWSLV).

The protein belongs to the HRG family.

Its subcellular location is the cell membrane. In terms of biological role, heme transporter that mediates heme uptake across the plasma membrane. The protein is Heme transporter hrg-4 of Caenorhabditis elegans.